The sequence spans 60 residues: MSEKTVKVQLVKSLIGTRESHRATVRGLGLRRLNSVSELQDTPAVRGMINKVSYLVKVIG.

The protein belongs to the universal ribosomal protein uL30 family. As to quaternary structure, part of the 50S ribosomal subunit.

This chain is Large ribosomal subunit protein uL30, found in Burkholderia mallei (strain NCTC 10247).